The sequence spans 282 residues: MISMNPIMIRNNLSRSSSPAAPPTTNHSSTVDYFSIKPKLSLDINSQSDSNSTQSNNNEDTHSEQSDYNSYTHNQYYDSDDDEDDFDIRDQLLDPFDKITLSNCNEEYYSPLTPFDGQTTSPQDSIISSKSSNKSTTVVPSPQFQLTLPKLTTYSFLIVDDNIINLKILNRILLKLFPKCHIVQIQDSKLVKDLLHKQSFDSIFIDIEMPDVNGIDIAQFVRQDTKFDNMGMVAVTTRNSTQDLELFKQCGIDFTFHKPLNYSLDFMANSIDDIIITRKNKI.

Low complexity-rich tracts occupy residues 12–30 (NLSRSSSPAAPPTTNHSST) and 45–58 (NSQSDSNSTQSNNN). Disordered stretches follow at residues 12 to 31 (NLSRSSSPAAPPTTNHSSTV), 43 to 84 (DINS…DDED), and 112 to 139 (LTPFDGQTTSPQDSIISSKSSNKSTTVV). Residues 66-77 (SDYNSYTHNQYY) show a composition bias toward polar residues. Over residues 125 to 139 (SIISSKSSNKSTTVV) the composition is skewed to low complexity. The Response regulatory domain occupies 155–273 (SFLIVDDNII…LDFMANSIDD (119 aa)). At Asp206 the chain carries 4-aspartylphosphate.

Functionally, required for stress adaptation, morphogenesis and virulence. The sequence is that of Stress response regulator protein 1 (SRR1) from Candida albicans (strain SC5314 / ATCC MYA-2876) (Yeast).